A 275-amino-acid chain; its full sequence is Dermonecrotic toxin SpaSicTox-betaIIA3 (275 aa).

Histidine 5 is an active-site residue. 2 residues coordinate Mg(2+): glutamate 25 and aspartate 27. Residue histidine 41 is the Nucleophile of the active site. Cystine bridges form between cysteine 45/cysteine 51 and cysteine 47/cysteine 190. Aspartate 85 is a binding site for Mg(2+).

It belongs to the arthropod phospholipase D family. Class II subfamily. Requires Mg(2+) as cofactor. Expressed by the venom gland.

Its subcellular location is the secreted. The enzyme catalyses an N-(acyl)-sphingosylphosphocholine = an N-(acyl)-sphingosyl-1,3-cyclic phosphate + choline. It carries out the reaction an N-(acyl)-sphingosylphosphoethanolamine = an N-(acyl)-sphingosyl-1,3-cyclic phosphate + ethanolamine. The catalysed reaction is a 1-acyl-sn-glycero-3-phosphocholine = a 1-acyl-sn-glycero-2,3-cyclic phosphate + choline. It catalyses the reaction a 1-acyl-sn-glycero-3-phosphoethanolamine = a 1-acyl-sn-glycero-2,3-cyclic phosphate + ethanolamine. In terms of biological role, dermonecrotic toxins cleave the phosphodiester linkage between the phosphate and headgroup of certain phospholipids (sphingolipid and lysolipid substrates), forming an alcohol (often choline) and a cyclic phosphate. This toxin acts on sphingomyelin (SM). It may also act on ceramide phosphoethanolamine (CPE), lysophosphatidylcholine (LPC) and lysophosphatidylethanolamine (LPE), but not on lysophosphatidylserine (LPS), and lysophosphatidylglycerol (LPG). It acts by transphosphatidylation, releasing exclusively cyclic phosphate products as second products. Induces dermonecrosis, hemolysis, increased vascular permeability, edema, inflammatory response, and platelet aggregation. This Sicarius patagonicus (Six-eyed sand spider) protein is Dermonecrotic toxin SpaSicTox-betaIIA3.